The sequence spans 393 residues: Elongation factor Tu (393 aa).

Residues 10–203 (KPHVNIGTIG…AVDDYIPEPV (194 aa)) form the tr-type G domain. A G1 region spans residues 19–26 (GHVDHGKT). 19-26 (GHVDHGKT) lines the GTP pocket. T26 lines the Mg(2+) pocket. The segment at 60–64 (GITIS) is G2. The tract at residues 81–84 (DCPG) is G3. Residues 81-85 (DCPGH) and 136-139 (NKVD) contribute to the GTP site. The G4 stretch occupies residues 136 to 139 (NKVD). The interval 173 to 175 (SAL) is G5.

This sequence belongs to the TRAFAC class translation factor GTPase superfamily. Classic translation factor GTPase family. EF-Tu/EF-1A subfamily. In terms of assembly, monomer.

It localises to the cytoplasm. It catalyses the reaction GTP + H2O = GDP + phosphate + H(+). GTP hydrolase that promotes the GTP-dependent binding of aminoacyl-tRNA to the A-site of ribosomes during protein biosynthesis. The protein is Elongation factor Tu of Chlorobaculum parvum (strain DSM 263 / NCIMB 8327) (Chlorobium vibrioforme subsp. thiosulfatophilum).